The sequence spans 202 residues: S-modulin (202 aa).

G2 is lipidated: N-myristoyl glycine. EF-hand domains lie at 25–60 (QEEL…FPDA), 61–96 (DPKA…TSSG), 97–132 (KANQ…IFKM), and 147–182 (TPEK…NKEI). Residues D74, N76, D78, T80, E85, D110, D112, N114, T116, and E121 each coordinate Ca(2+).

It belongs to the recoverin family. The N-terminus is blocked.

Calcium-dependent regulator of light sensitivity of cGMP phosphodiesterase in rod outer segments. Controls rhodopsin phosphorylation in a Ca(2+)-dependent manner. This is S-modulin from Aquarana catesbeiana (American bullfrog).